Here is a 197-residue protein sequence, read N- to C-terminus: 7-methyl-GTP pyrophosphatase (197 aa).

D69 serves as the catalytic Proton acceptor.

Belongs to the Maf family. YceF subfamily. A divalent metal cation is required as a cofactor.

The protein resides in the cytoplasm. It carries out the reaction N(7)-methyl-GTP + H2O = N(7)-methyl-GMP + diphosphate + H(+). In terms of biological role, nucleoside triphosphate pyrophosphatase that hydrolyzes 7-methyl-GTP (m(7)GTP). May have a dual role in cell division arrest and in preventing the incorporation of modified nucleotides into cellular nucleic acids. The protein is 7-methyl-GTP pyrophosphatase of Syntrophotalea carbinolica (strain DSM 2380 / NBRC 103641 / GraBd1) (Pelobacter carbinolicus).